The primary structure comprises 89 residues: Small ribosomal subunit protein uS19 (89 aa).

The protein belongs to the universal ribosomal protein uS19 family.

In terms of biological role, protein S19 forms a complex with S13 that binds strongly to the 16S ribosomal RNA. The sequence is that of Small ribosomal subunit protein uS19 from Xylella fastidiosa (strain M12).